The primary structure comprises 151 residues: Small ribosomal subunit protein uS15 (151 aa).

Residues Ser-21 and Ser-32 each carry the phosphoserine modification.

Belongs to the universal ribosomal protein uS15 family. In terms of assembly, component of the small ribosomal subunit (SSU). Mature yeast ribosomes consist of a small (40S) and a large (60S) subunit. The 40S small subunit contains 1 molecule of ribosomal RNA (18S rRNA) and at least 33 different proteins. The large 60S subunit contains 3 rRNA molecules (25S, 5.8S and 5S rRNA) and at least 46 different proteins.

The protein localises to the cytoplasm. In terms of biological role, component of the ribosome, a large ribonucleoprotein complex responsible for the synthesis of proteins in the cell. The small ribosomal subunit (SSU) binds messenger RNAs (mRNAs) and translates the encoded message by selecting cognate aminoacyl-transfer RNA (tRNA) molecules. The large subunit (LSU) contains the ribosomal catalytic site termed the peptidyl transferase center (PTC), which catalyzes the formation of peptide bonds, thereby polymerizing the amino acids delivered by tRNAs into a polypeptide chain. The nascent polypeptides leave the ribosome through a tunnel in the LSU and interact with protein factors that function in enzymatic processing, targeting, and the membrane insertion of nascent chains at the exit of the ribosomal tunnel. This is Small ribosomal subunit protein uS15 (rps13) from Schizosaccharomyces pombe (strain 972 / ATCC 24843) (Fission yeast).